The chain runs to 486 residues: Cytochrome P450 monooxygenase 1 (486 aa).

An N-terminal signal peptide occupies residues 1–21; the sequence is MSHFLPTLILTSLTLVAYVLA. Residue asparagine 346 is glycosylated (N-linked (GlcNAc...) asparagine). Residue cysteine 430 coordinates heme. A glycan (N-linked (GlcNAc...) asparagine) is linked at asparagine 434.

It belongs to the cytochrome P450 family. Requires heme as cofactor.

It functions in the pathway mycotoxin biosynthesis. Functionally, cytochrome P450 monooxygenase; part of the gene cluster that mediates the biosynthesis of aphidicolin, a specific inhibitor of eukaryotic DNA synthesis and DNA polymerase alpha. The geranylgeranyl pyrophosphate synthase GGS is required for supplying a sufficient amount of geranylgeranyl diphosphate (GGDP), the general precursor of diterpenes. The diterpene synthase ACS then catalyzes the conversion of geranylgeranyl diphosphate to aphidicolan-16-beta-ol via the intermediate syn-copalyldiphosphate (syn-CDP). In addition to aphidicolan-16-beta-ol, the enzyme also produces low levels of amphidicol-15-ene and amphidicol-16-ene. The cytochrome P450 monooxygenase P450-2 then catalyzes the two-step hydroxylation from aphidicolan-16-beta-ol to 3-deoxyaphidicolin via a 17,3-deoxyaphidicolin intermediate. Finally, the cytochrome P450 monooxygenase P450-1 converts 3-deoxyaphidicolin to aphidicolin. The protein is Cytochrome P450 monooxygenase 1 (PbP450-1) of Neocamarosporium betae (Beet black rot fungus).